The primary structure comprises 394 residues: Elongation factor Tu 2 (394 aa).

One can recognise a tr-type G domain in the interval 10–204 (KPHVNVGTIG…FLDSYIPEPE (195 aa)). The tract at residues 19–26 (GHVDHGKT) is G1. A GTP-binding site is contributed by 19 to 26 (GHVDHGKT). Thr-26 lines the Mg(2+) pocket. The tract at residues 60–64 (GITIN) is G2. The G3 stretch occupies residues 81–84 (DCPG). GTP-binding positions include 81–85 (DCPGH) and 136–139 (NKCD). The segment at 136 to 139 (NKCD) is G4. The interval 174-176 (SAL) is G5.

This sequence belongs to the TRAFAC class translation factor GTPase superfamily. Classic translation factor GTPase family. EF-Tu/EF-1A subfamily. Monomer.

It localises to the cytoplasm. It carries out the reaction GTP + H2O = GDP + phosphate + H(+). Functionally, GTP hydrolase that promotes the GTP-dependent binding of aminoacyl-tRNA to the A-site of ribosomes during protein biosynthesis. The protein is Elongation factor Tu 2 of Shigella flexneri serotype 5b (strain 8401).